An 88-amino-acid chain; its full sequence is MLTNADREQIIAQYQRGESDTGSPEVQVALLSARINDLQNHFKAHKADHHSRRGLIRMVNTRRKLLDYLKSKDLGRYTTLISQLGLRR.

It belongs to the universal ribosomal protein uS15 family. As to quaternary structure, part of the 30S ribosomal subunit. Forms a bridge to the 50S subunit in the 70S ribosome, contacting the 23S rRNA.

One of the primary rRNA binding proteins, it binds directly to 16S rRNA where it helps nucleate assembly of the platform of the 30S subunit by binding and bridging several RNA helices of the 16S rRNA. Functionally, forms an intersubunit bridge (bridge B4) with the 23S rRNA of the 50S subunit in the ribosome. The protein is Small ribosomal subunit protein uS15 of Psychrobacter arcticus (strain DSM 17307 / VKM B-2377 / 273-4).